The chain runs to 163 residues: NADH-quinone oxidoreductase subunit I (163 aa).

4Fe-4S ferredoxin-type domains lie at 55 to 84 and 94 to 123; these read RRYE…IESE and TQYD…ETRV. Residues Cys64, Cys67, Cys70, Cys74, Cys103, Cys106, Cys109, and Cys113 each coordinate [4Fe-4S] cluster.

It belongs to the complex I 23 kDa subunit family. NDH-1 is composed of 14 different subunits. Subunits NuoA, H, J, K, L, M, N constitute the membrane sector of the complex. It depends on [4Fe-4S] cluster as a cofactor.

Its subcellular location is the cell inner membrane. It carries out the reaction a quinone + NADH + 5 H(+)(in) = a quinol + NAD(+) + 4 H(+)(out). Functionally, NDH-1 shuttles electrons from NADH, via FMN and iron-sulfur (Fe-S) centers, to quinones in the respiratory chain. The immediate electron acceptor for the enzyme in this species is believed to be ubiquinone. Couples the redox reaction to proton translocation (for every two electrons transferred, four hydrogen ions are translocated across the cytoplasmic membrane), and thus conserves the redox energy in a proton gradient. This chain is NADH-quinone oxidoreductase subunit I, found in Hydrogenovibrio crunogenus (strain DSM 25203 / XCL-2) (Thiomicrospira crunogena).